Consider the following 323-residue polypeptide: Calcium homeostasis modulator protein 2 (323 aa).

Topologically, residues 1 to 21 are cytoplasmic; sequence MAALIAENFRFLSLFFKSKDV. The interval 14-39 is central pore; it reads LFFKSKDVMIFNGLVALGTVGSQELF. The helical transmembrane segment at 22-43 threads the bilayer; that stretch reads MIFNGLVALGTVGSQELFTVVA. Topologically, residues 44 to 52 are extracellular; that stretch reads FHCPCSPAR. Intrachain disulfides connect Cys46–Cys130 and Cys48–Cys162. A helical membrane pass occupies residues 53–76; that stretch reads NYLYGLAAIGVPALALFLIGVILN. At 77 to 101 the chain is on the cytoplasmic side; that stretch reads NHTWNLVAECQYRRTKNCSAAPNFL. The helical transmembrane segment at 102–132 threads the bilayer; it reads LLSSIVGRAAVAPVTWSVISLLRGEAYVCAL. Over 133–179 the chain is Extracellular; that stretch reads SEFVNPHSLMVGERSFPVAHATEILARFPCGEGPANLSVFREEVSRR. The interval 145–152 is hemichannel docking; sequence ERSFPVAH. Residues 180 to 206 form a helical membrane-spanning segment; sequence LKYESQLFGWLLIGVVAILVFLTKCLK. Over 207 to 323 the chain is Cytoplasmic; the sequence is HYCSPLSYRQ…DHVEMSLLPS (117 aa). An intersubunit interaction region spans residues 214–251; it reads YRQEAYWAQYRANEDQLFQRTAEVHSRVLAANNVRRFF.

It belongs to the CALHM family. As to quaternary structure, homo-undecamer. Two undecameric hemichannels can assemble in a head-to-head manner to form a gap junction.

It is found in the cell membrane. It carries out the reaction ATP(in) = ATP(out). Functionally, pore-forming subunit of Ca(2+) homeostasis modulator channels. Mediates ATP release from astrocytes and ATP-induced Ca(2+) influx in microglia thus regulating neuronal ATP and Ca(2+) homeostasis, synaptic transmission and neuroinflammatory response. May form intercellular gap junctions. The gating mechanism remains unknown. This is Calcium homeostasis modulator protein 2 (CALHM2) from Bos taurus (Bovine).